The chain runs to 754 residues: Nibrin (754 aa).

Residues 24-83 (YVVGRKNCAILIEKDQSISRNHAVLTANFSVTNLSQTDEIPVLALKDNSKYGTFVNEEKM) enclose the FHA domain. 2 consecutive BRCT domains span residues 105-181 (KFRI…TEFL) and 224-315 (GKTF…LAVI). Residues 111-328 (EPLVACSSCL…TKNYCDPQGH (218 aa)) are mediates interaction with SP100. The interval 221-402 (IFKGKTFIFL…FRMLSQDAPT (182 aa)) is interaction with MTOR, MAPKAP1 and RICTOR. The residue at position 278 (serine 278) is a Phosphoserine; by ATM. The segment at 326–346 (QGHPSTGLKTTTPGPSLSQGL) is disordered. Residues 328–346 (HPSTGLKTTTPGPSLSQGL) are compositionally biased toward polar residues. Position 337 is a phosphothreonine (threonine 337). Position 343 is a phosphoserine; by ATM (serine 343). Phosphoserine is present on serine 347. An N6-lactoyllysine modification is found at lysine 388. Disordered regions lie at residues 396–415 (LSQD…NNNS) and 431–475 (LSPT…NQEM). A Phosphoserine modification is found at serine 397. A Phosphothreonine modification is found at threonine 402. 2 stretches are compositionally biased toward polar residues: residues 431–440 (LSPTKLPSIN) and 447–462 (SQQQ…FQPS). At serine 432 the chain carries Phosphoserine. A Glycyl lysine isopeptide (Lys-Gly) (interchain with G-Cter in ubiquitin) cross-link involves residue lysine 435. The short motif at 461-467 (PSTKKRE) is the Nuclear localization signal element. Serine 509 and serine 518 each carry phosphoserine. Glycyl lysine isopeptide (Lys-Gly) (interchain with G-Cter in SUMO2) cross-links involve residues lysine 571 and lysine 582. Phosphoserine is present on residues serine 615 and serine 673. Glycyl lysine isopeptide (Lys-Gly) (interchain with G-Cter in ubiquitin) cross-links involve residues lysine 686, lysine 690, and lysine 735. A FxF/Y motif motif is present at residues 740-749 (ADDLFRYNPY).

The protein belongs to the Nibrin family. As to quaternary structure, component of the MRN complex composed of two heterodimers RAD50 and MRE11 associated with a single NBN. The MRN complexes dimerize on DNA to form joined MRN-MRN oligomers required for DNA double-strand break repair. The MRN complexes dimerize on DNA to form joined MRN-MRN oligomers required for DNA double-strand break repair. As part of the MRN complex, interacts with MCM9; the interaction recruits the complex to DNA repair sites. Component of the BASC complex, at least composed of BRCA1, MSH2, MSH6, MLH1, ATM, BLM, RAD50, MRE11 and NBN. Interacts with histone H2AX; this requires phosphorylation of H2AX on 'Ser-139' and promotes NBN recruitment to DNA damage sites. Interacts with (phosphorylated) MDC1; promoting NBN recruitment to DNA damage sites. Interacts with (phosphorylated) RAD17; promoting NBN recruitment to DNA damage sites. Interacts (via FxF/Y motif) with ATM. Interacts with HJURP. Interacts with INTS3. Interacts with KPNA2. Interacts with TERF2; interaction is disrupted upon NBN phosphorylation by CDK2. Interacts with (phosphorylated) RBBP8/CtIP; the interaction links the role of the MRN complex in DNA double-strand break sensing to resection. Interacts with SP100; recruits NBN to PML bodies. Interacts with ATF2. Interacts with MTOR, MAPKAP1 isoform 2 and RICTOR; indicative for an association with the mTORC2 complex. Interacts with MRNIP. Interacts with UFL1; promoting UFL1 recruitment to double-strand breaks following DNA damage. Interacts with CYREN (via XLF motif). Post-translationally, phosphorylated by ATM in response of ionizing radiation, and such phosphorylation is responsible intra-S phase checkpoint control and telomere maintenance. Phosphorylated at Ser-432 by CDK2 in S/G2 phases abolishes interaction with TERF2, enabling DCLRE1B/Apollo recruitment to telomeres. Phosphorylation at Ser-432 in response to dysfunctional telomeres promotes non-homologous end joining repair at telomeres, while dephosphorylation by PPP1CA promotes microhomology-mediated end-joining (MMEJ) repair. Ubiquitinated at Lys-435 via 'Lys-6'-linked ubiquitin chains by RNF8, promoting NBN recruitment to DNA double-strand breaks (DSBs). Ubiquitinated at Lys-686 and Lys-689 via 'Lys-63'-linked ubiquitin chains by PELI1: ubiquitination takes place following PELI1 phosphorylation and promotes ATM activation and DNA repair. Ubiquitinated at Lys-735 via 'Lys-63'-linked ubiquitin chains by the SCF(SKP2) complex: ubiquitination takes place following SKP2 phosphorylation and promotes ATM activation and DNA repair. In terms of processing, lactylation at Lys-388 by KAT5 in response to DNA damage promotes recruitment of the MRN complex to DNA damage sites. Delactylated by HDAC3.

It is found in the nucleus. Its subcellular location is the chromosome. The protein localises to the PML body. It localises to the telomere. Functionally, component of the MRN complex, which plays a central role in double-strand break (DSB) repair, DNA recombination, maintenance of telomere integrity and meiosis. The MRN complex is involved in the repair of DNA double-strand breaks (DSBs) via homologous recombination (HR), an error-free mechanism which primarily occurs during S and G2 phases. The complex (1) mediates the end resection of damaged DNA, which generates proper single-stranded DNA, a key initial steps in HR, and is (2) required for the recruitment of other repair factors and efficient activation of ATM and ATR upon DNA damage. The MRN complex possesses single-strand endonuclease activity and double-strand-specific 3'-5' exonuclease activity, which are provided by MRE11, to initiate end resection, which is required for single-strand invasion and recombination. Within the MRN complex, NBN acts as a protein-protein adapter, which specifically recognizes and binds phosphorylated proteins, promoting their recruitment to DNA damage sites. Recruits MRE11 and RAD50 components of the MRN complex to DSBs in response to DNA damage. Promotes the recruitment of PI3/PI4-kinase family members ATM, ATR, and probably DNA-PKcs to the DNA damage sites, activating their functions. Mediates the recruitment of phosphorylated RBBP8/CtIP to DSBs, leading to cooperation between the MRN complex and RBBP8/CtIP to initiate end resection. RBBP8/CtIP specifically promotes the endonuclease activity of the MRN complex to clear DNA ends containing protein adducts. The MRN complex is also required for the processing of R-loops. NBN also functions in telomere length maintenance via its interaction with TERF2: interaction with TERF2 during G1 phase preventing recruitment of DCLRE1B/Apollo to telomeres. NBN also promotes DNA repair choice at dysfunctional telomeres: NBN phosphorylation by CK2 promotes non-homologous end joining repair at telomeres, while unphosphorylated NBN promotes microhomology-mediated end-joining (MMEJ) repair. Enhances AKT1 phosphorylation possibly by association with the mTORC2 complex. The sequence is that of Nibrin (NBN) from Pongo abelii (Sumatran orangutan).